The chain runs to 276 residues: Large ribosomal subunit protein uL2 (276 aa).

Residues Val225 to Arg276 are disordered.

This sequence belongs to the universal ribosomal protein uL2 family. Part of the 50S ribosomal subunit. Forms a bridge to the 30S subunit in the 70S ribosome.

In terms of biological role, one of the primary rRNA binding proteins. Required for association of the 30S and 50S subunits to form the 70S ribosome, for tRNA binding and peptide bond formation. It has been suggested to have peptidyltransferase activity; this is somewhat controversial. Makes several contacts with the 16S rRNA in the 70S ribosome. The sequence is that of Large ribosomal subunit protein uL2 from Cupriavidus taiwanensis (strain DSM 17343 / BCRC 17206 / CCUG 44338 / CIP 107171 / LMG 19424 / R1) (Ralstonia taiwanensis (strain LMG 19424)).